A 148-amino-acid polypeptide reads, in one-letter code: UPF0134 protein MPN_410 (148 aa).

It belongs to the UPF0134 family.

This is UPF0134 protein MPN_410 from Mycoplasma pneumoniae (strain ATCC 29342 / M129 / Subtype 1) (Mycoplasmoides pneumoniae).